Consider the following 25-residue polypeptide: Caerin-2.3 (25 aa).

Expressed by the skin parotoid and/or rostral glands.

It is found in the secreted. Its function is as follows. Acts as a male sex pheromone that attracts females. Has no antimicrobial activity. The chain is Caerin-2.3 from Ranoidea caerulea (Green tree frog).